A 62-amino-acid chain; its full sequence is Large ribosomal subunit protein uL29 (62 aa).

It belongs to the universal ribosomal protein uL29 family.

This chain is Large ribosomal subunit protein uL29, found in Oleidesulfovibrio alaskensis (strain ATCC BAA-1058 / DSM 17464 / G20) (Desulfovibrio alaskensis).